Here is a 218-residue protein sequence, read N- to C-terminus: Large ribosomal subunit protein uL4 (218 aa).

The tract at residues threonine 55–glycine 83 is disordered.

This sequence belongs to the universal ribosomal protein uL4 family. Part of the 50S ribosomal subunit.

One of the primary rRNA binding proteins, this protein initially binds near the 5'-end of the 23S rRNA. It is important during the early stages of 50S assembly. It makes multiple contacts with different domains of the 23S rRNA in the assembled 50S subunit and ribosome. Its function is as follows. Forms part of the polypeptide exit tunnel. The polypeptide is Large ribosomal subunit protein uL4 (Bifidobacterium longum (strain DJO10A)).